We begin with the raw amino-acid sequence, 74 residues long: Progonadoliberin-3 (74 aa).

The first 15 residues, 1–15 (VQVVVLALVAQVTLS), serve as a signal peptide directing secretion. Glutamine 16 is modified (pyrrolidone carboxylic acid). A Glycine amide modification is found at glycine 25.

It belongs to the GnRH family.

It localises to the secreted. Stimulates the secretion of gonadotropins. This is Progonadoliberin-3 (gnrh3) from Oncorhynchus mykiss (Rainbow trout).